A 115-amino-acid chain; its full sequence is Holo-[acyl-carrier-protein] synthase (115 aa).

Asp-6 and Glu-51 together coordinate Mg(2+).

It belongs to the P-Pant transferase superfamily. AcpS family. Requires Mg(2+) as cofactor.

It is found in the cytoplasm. The catalysed reaction is apo-[ACP] + CoA = holo-[ACP] + adenosine 3',5'-bisphosphate + H(+). Its function is as follows. Transfers the 4'-phosphopantetheine moiety from coenzyme A to a Ser of acyl-carrier-protein. The sequence is that of Holo-[acyl-carrier-protein] synthase from Campylobacter jejuni subsp. jejuni serotype O:23/36 (strain 81-176).